The primary structure comprises 72 residues: uncharacterized protein (72 aa).

Residues 33–53 (VCIFFSLIFFFFFFFFCVNWG) traverse the membrane as a helical segment.

The protein resides in the membrane. This is an uncharacterized protein from Dictyostelium discoideum (Social amoeba).